Reading from the N-terminus, the 572-residue chain is Proline--tRNA ligase (572 aa).

Belongs to the class-II aminoacyl-tRNA synthetase family. ProS type 1 subfamily. As to quaternary structure, homodimer.

Its subcellular location is the cytoplasm. It catalyses the reaction tRNA(Pro) + L-proline + ATP = L-prolyl-tRNA(Pro) + AMP + diphosphate. Functionally, catalyzes the attachment of proline to tRNA(Pro) in a two-step reaction: proline is first activated by ATP to form Pro-AMP and then transferred to the acceptor end of tRNA(Pro). As ProRS can inadvertently accommodate and process non-cognate amino acids such as alanine and cysteine, to avoid such errors it has two additional distinct editing activities against alanine. One activity is designated as 'pretransfer' editing and involves the tRNA(Pro)-independent hydrolysis of activated Ala-AMP. The other activity is designated 'posttransfer' editing and involves deacylation of mischarged Ala-tRNA(Pro). The misacylated Cys-tRNA(Pro) is not edited by ProRS. This Yersinia enterocolitica serotype O:8 / biotype 1B (strain NCTC 13174 / 8081) protein is Proline--tRNA ligase.